The chain runs to 359 residues: Protein Wnt-8a (359 aa).

The N-terminal stretch at 1-25 (MNPCQIFASLVMSICCHILSSTAWS) is a signal peptide. C55 and C66 form a disulfide bridge. An N-linked (GlcNAc...) asparagine glycan is attached at N104. 10 disulfides stabilise this stretch: C105–C113, C115–C133, C181–C195, C183–C190, C260–C298, C276–C291, C295–C337, C313–C328, C315–C325, and C320–C321. S187 carries the O-palmitoleoyl serine lipid modification. Residues N263 and N282 are each glycosylated (N-linked (GlcNAc...) asparagine). The N-linked (GlcNAc...) asparagine glycan is linked to N348.

Belongs to the Wnt family. Post-translationally, palmitoleoylation is required for efficient binding to frizzled receptors. Depalmitoleoylation leads to Wnt signaling pathway inhibition. In terms of processing, proteolytic processing by tiki1 and tiki2 promotes oxidation and formation of large disulfide-bond oligomers, leading to inactivation of wnt8. As to expression, expressed in the margin of the pregastrula embryo destined to be the future mesoderm.

It localises to the secreted. The protein resides in the extracellular space. It is found in the extracellular matrix. Functionally, ligand for members of the frizzled family of seven transmembrane receptors. Required for mesoderm and neural ectoderm patterning during gastrulation. Involved in axis formation during embryonic development, via activation of canonical Wnt/CTNNB1 signaling. May be involved in the specification of the spatial patterns of expression of Gsc and other regulatory genes leading to the establishment of the embryonic axis. The chain is Protein Wnt-8a (wnt8a) from Danio rerio (Zebrafish).